Here is a 543-residue protein sequence, read N- to C-terminus: Zinc finger protein 280B (543 aa).

Residue Met1 is modified to N-acetylmethionine. Residues 1-10 (MEQSCEEEKE) show a composition bias toward acidic residues. The disordered stretch occupies residues 1-23 (MEQSCEEEKEPEPQKNIQETKQV). 2 positions are modified to phosphoserine: Ser68 and Ser70. The interval 105–138 (SQLESRSTDSPIIIEPLSKPDYRNSSPQVVPNNS) is disordered. The span at 128 to 138 (NSSPQVVPNNS) shows a compositional bias: low complexity. Glycyl lysine isopeptide (Lys-Gly) (interchain with G-Cter in SUMO2) cross-links involve residues Lys173, Lys247, and Lys261. 4 C2H2-type zinc fingers span residues 343-366 (TTCQ…ENVH), 373-396 (TVCK…KDHH), 432-454 (LLCP…YRGH), and 460-483 (HQCS…TQCH). Residues 518–543 (ASITVSTSDSEPSLPRSKSKISKKSH) form a disordered region. Basic residues predominate over residues 534–543 (SKSKISKKSH).

It is found in the nucleus. Functionally, may function as a transcription factor. The chain is Zinc finger protein 280B (ZNF280B) from Homo sapiens (Human).